We begin with the raw amino-acid sequence, 591 residues long: Glutathione S-transferase T2 (591 aa).

Residues 1–82 (MKLKVYADRM…YLSSAYASVV (82 aa)) form the GST N-terminal domain. Glutathione is bound by residues 11–12 (SQ), 40–41 (QL), 53–54 (KV), and 66–67 (ES). One can recognise a GST C-terminal domain in the interval 89–226 (DLSKRAKIHS…EVLFRAKDRF (138 aa)). The disordered stretch occupies residues 229–272 (QREMATASKPGPQSKIIQFSSIGGTSDGPNLVQDTTDRKARRRK). A compositionally biased stretch (polar residues) spans 243–262 (KIIQFSSIGGTSDGPNLVQD). A Myb-like domain is found at 265-338 (DRKARRRKWS…HCRQRWRKIN (74 aa)).

This sequence belongs to the GST superfamily. Theta family.

Its subcellular location is the peroxisome. It catalyses the reaction RX + glutathione = an S-substituted glutathione + a halide anion + H(+). May be involved in the conjugation of reduced glutathione to a wide number of exogenous and endogenous hydrophobic electrophiles and have a detoxification role against certain herbicides. In Arabidopsis thaliana (Mouse-ear cress), this protein is Glutathione S-transferase T2 (GSTT2).